We begin with the raw amino-acid sequence, 166 residues long: Polyadenylate-binding protein 2 (166 aa).

The region spanning 55–132 (QSVYVGNVDY…RPLKVTPKRT (78 aa)) is the RRM domain. The disordered stretch occupies residues 129–166 (PKRTNVPGMSRGRGRGRGRGRGRGRGGYRGRARGFAPY). Basic residues predominate over residues 140–160 (GRGRGRGRGRGRGRGGYRGRA).

It is found in the nucleus. This chain is Polyadenylate-binding protein 2 (pab2), found in Schizosaccharomyces pombe (strain 972 / ATCC 24843) (Fission yeast).